Here is a 424-residue protein sequence, read N- to C-terminus: Lipoamide acyltransferase component of branched-chain alpha-keto acid dehydrogenase complex (424 aa).

The Lipoyl-binding domain occupies 3–78 (IEQMTMPQLG…QVGEMICKIE (76 aa)). Lys-44 is subject to N6-lipoyllysine. A disordered region spans residues 82-115 (ANPAEQKQEQPAASEAAENPVAKSAGAADQPNKK). In terms of domain architecture, Peripheral subunit-binding (PSBD) spans 116–153 (RYSPAVLRLAGEHGIDLDQVTGTGAGGRITRKDIQRLI). The disordered stretch occupies residues 154-193 (ETGGVQEQNPEELKTAAPAPKSASKPEPKEETSYPASAAG). Catalysis depends on residues His-395 and Asp-399.

It belongs to the 2-oxoacid dehydrogenase family. Forms a 24-polypeptide structural core with octahedral symmetry. (R)-lipoate is required as a cofactor.

It carries out the reaction N(6)-[(R)-dihydrolipoyl]-L-lysyl-[protein] + 2-methylpropanoyl-CoA = N(6)-[(R)-S(8)-2-methylpropanoyldihydrolipoyl]-L-lysyl-[protein] + CoA. Its function is as follows. The branched-chain alpha-keto dehydrogenase complex catalyzes the overall conversion of alpha-keto acids to acyl-CoA and CO(2). It contains multiple copies of three enzymatic components: branched-chain alpha-keto acid decarboxylase (E1), lipoamide acyltransferase (E2) and lipoamide dehydrogenase (E3). The protein is Lipoamide acyltransferase component of branched-chain alpha-keto acid dehydrogenase complex (bfmBB) of Bacillus subtilis (strain 168).